Consider the following 309-residue polypeptide: Isoaspartyl peptidase/L-asparaginase (309 aa).

The active-site Nucleophile is threonine 166. Substrate is bound by residues 194 to 197 (RVGD) and 217 to 220 (TGHG).

It belongs to the Ntn-hydrolase family. As to quaternary structure, heterodimer of an alpha and beta chain produced by autocleavage. Cleaved into an alpha and beta chain by autocatalysis; this activates the enzyme. The N-terminal residue of the beta subunit is responsible for the nucleophile hydrolase activity.

The protein resides in the cytoplasm. It catalyses the reaction L-asparagine + H2O = L-aspartate + NH4(+). It carries out the reaction Cleavage of a beta-linked Asp residue from the N-terminus of a polypeptide.. Functionally, has both L-asparaginase and beta-aspartyl peptidase activity. Does not have aspartylglucosaminidase activity and is inactive toward GlcNAc-L-Asn. Likewise, has no activity toward glutamine. The protein is Isoaspartyl peptidase/L-asparaginase (asrgl1) of Xenopus laevis (African clawed frog).